Reading from the N-terminus, the 113-residue chain is Large ribosomal subunit protein P2B (113 aa).

Positions 66–113 (PSGGGAIDMGAPAAVAGGGAAPAEEAKKEEKVEEKEESDEDMGFSLFD) are disordered. Residues 89 to 99 (EEAKKEEKVEE) are compositionally biased toward basic and acidic residues.

Belongs to the eukaryotic ribosomal protein P1/P2 family. In terms of assembly, P1 and P2 exist as dimers at the large ribosomal subunit. In terms of processing, phosphorylated.

In terms of biological role, plays an important role in the elongation step of protein synthesis. The chain is Large ribosomal subunit protein P2B (RPP2B) from Zea mays (Maize).